The sequence spans 251 residues: Probable transcriptional regulatory protein Cgl1663/cg1872 (251 aa).

The tract at residues 1 to 22 (MSGHSKWATTKHKKAANDAKRG) is disordered.

Belongs to the TACO1 family.

The protein localises to the cytoplasm. In Corynebacterium glutamicum (strain ATCC 13032 / DSM 20300 / JCM 1318 / BCRC 11384 / CCUG 27702 / LMG 3730 / NBRC 12168 / NCIMB 10025 / NRRL B-2784 / 534), this protein is Probable transcriptional regulatory protein Cgl1663/cg1872.